A 193-amino-acid chain; its full sequence is Mediator of RNA polymerase II transcription subunit 11 (193 aa).

Residues 31–68 (AREIMQDLGKEKQISKNKMDDNANSFKKLITQVENELS) adopt a coiled-coil conformation. The tract at residues 115 to 193 (IEPPTQEVDE…EEEEGEQMEN (79 aa)) is disordered. The span at 121–143 (EVDEDNEDEEDSGDADMLEETPE) shows a compositional bias: acidic residues. Residues 150–175 (TTSSSATTSDGGSGGADDAASSSAPR) are compositionally biased toward low complexity. Positions 184–193 (EEEEGEQMEN) are enriched in acidic residues.

It belongs to the Mediator complex subunit 11 family. As to quaternary structure, component of the Mediator complex.

The protein localises to the nucleus. Component of the Mediator complex, a coactivator involved in the regulated transcription of nearly all RNA polymerase II-dependent genes. Mediator functions as a bridge to convey information from gene-specific regulatory proteins to the basal RNA polymerase II transcription machinery. Mediator is recruited to promoters by direct interactions with regulatory proteins and serves as a scaffold for the assembly of a functional pre-initiation complex with RNA polymerase II and the general transcription factors. This is Mediator of RNA polymerase II transcription subunit 11 (mdt-11) from Caenorhabditis briggsae.